The following is a 495-amino-acid chain: Protein-serine O-palmitoleoyltransferase porcupine (495 aa).

8 helical membrane passes run 46–66, 92–112, 184–204, 232–252, 358–378, 403–422, 434–454, and 475–495; these read TQYI…VLIV, VIDH…AVQW, TVLS…GPWI, MLIH…FLLT, PFGT…LHGL, LATI…SCTV, VINM…GCIF, and TELN…YFVI. Residue His376 is part of the active site.

The protein belongs to the membrane-bound acyltransferase family. Porcupine subfamily.

The protein localises to the endoplasmic reticulum membrane. It carries out the reaction [Wnt protein]-L-serine + (9Z)-hexadecenoyl-CoA = [Wnt protein]-O-(9Z)-hexadecenoyl-L-serine + CoA. Protein-serine O-palmitoleoyltransferase that acts as a key regulator of the Wnt signaling pathway by mediating the attachment of palmitoleate, a 16-carbon monounsaturated fatty acid (C16:1(9Z)), to Wnt proteins. Serine palmitoleoylation of WNT proteins is required for efficient binding to frizzled receptors. This is Protein-serine O-palmitoleoyltransferase porcupine from Anopheles gambiae (African malaria mosquito).